The following is a 242-amino-acid chain: Probable transcriptional regulatory protein Bcep18194_A5621 (242 aa).

Belongs to the TACO1 family.

The protein resides in the cytoplasm. This Burkholderia lata (strain ATCC 17760 / DSM 23089 / LMG 22485 / NCIMB 9086 / R18194 / 383) protein is Probable transcriptional regulatory protein Bcep18194_A5621.